We begin with the raw amino-acid sequence, 146 residues long: Hemoglobin subunit beta (146 aa).

Residue valine 1 is modified to N-acetylvaline. One can recognise a Globin domain in the interval 2–146 (HLTAEEKAAV…VATALAHKYH (145 aa)). At threonine 12 the chain carries Phosphothreonine. Serine 44 is subject to Phosphoserine. Lysine 59 is subject to N6-acetyllysine. Histidine 63 contributes to the heme b binding site. Lysine 82 is subject to N6-acetyllysine. Position 92 (histidine 92) interacts with heme b. An S-nitrosocysteine modification is found at cysteine 93. Residue lysine 144 is modified to N6-acetyllysine.

Belongs to the globin family. Heterotetramer of two alpha chains and two beta chains. As to expression, red blood cells.

In terms of biological role, involved in oxygen transport from the lung to the various peripheral tissues. The protein is Hemoglobin subunit beta (HBB) of Mustela lutreola (European mink).